Here is a 236-residue protein sequence, read N- to C-terminus: Histone H1 (236 aa).

Residues 1 to 10 show a composition bias toward basic and acidic residues; that stretch reads MPPKKTETKA. Disordered regions lie at residues 1–36 and 94–236; these read MPPKKTETKAADASAAAAPAPAAAPTSAPKTKSPST and KGVF…AEKA. The span at 11-36 shows a compositional bias: low complexity; the sequence is ADASAAAAPAPAAAPTSAPKTKSPST. The H15 domain occupies 36 to 111; sequence THASYLDMIT…GPSGGTKLAK (76 aa). The segment covering 109-122 has biased composition (basic residues); that stretch reads LAKKVAKPAPKKAA. Basic and acidic residues predominate over residues 123-150; that stretch reads PKKETKEKKPAAAKKEGAAKKETKEKKA. Residues 153 to 162 show a composition bias toward low complexity; the sequence is AKKAAAPKKA. A compositionally biased stretch (basic and acidic residues) spans 165–174; the sequence is PKKEVKEKKA. Low complexity predominate over residues 202–220; that stretch reads AKSTAKPAAAKKAAAPKKA. Residues 224-236 show a composition bias toward basic and acidic residues; it reads KKAEKAEPAAEKA.

Belongs to the histone H1/H5 family.

Its subcellular location is the nucleus. The protein resides in the chromosome. Functionally, could act as an H1-type linker histone. This Neurospora crassa (strain ATCC 24698 / 74-OR23-1A / CBS 708.71 / DSM 1257 / FGSC 987) protein is Histone H1 (hH1).